The primary structure comprises 367 residues: Serine/threonine-protein kinase Sgk2 (367 aa).

The interval 1–26 (MNSSPAGTPSPQPSRANGNINLGPSA) is disordered. Ser10 is subject to Phosphoserine. Residues 35-292 (FDFLKVIGKG…FLEIKNHVFF (258 aa)) form the Protein kinase domain. Residues 41–49 (IGKGNYGKV) and Lys64 contribute to the ATP site. The Nuclear localization signal signature appears at 68 to 78 (KKSILKKKEQS). Asp159 functions as the Proton acceptor in the catalytic mechanism. Phosphothreonine; by PDPK1 is present on Thr193. The 75-residue stretch at 293–367 (SPINWDDLYH…APEDDDILDC (75 aa)) folds into the AGC-kinase C-terminal domain. Residues Ser334 and Ser356 each carry the phosphoserine modification. A Phosphotyrosine modification is found at Tyr357.

The protein belongs to the protein kinase superfamily. AGC Ser/Thr protein kinase family. In terms of processing, activated by phosphorylation on Ser-356 by an unknown kinase (may be mTORC2 but not confirmed), transforming it into a substrate for PDPK1 which then phosphorylates it on Thr-193. Highly expressed in liver, kidney and pancreas, and at lower levels in brain.

Its subcellular location is the cytoplasm. It is found in the nucleus. It catalyses the reaction L-seryl-[protein] + ATP = O-phospho-L-seryl-[protein] + ADP + H(+). The enzyme catalyses L-threonyl-[protein] + ATP = O-phospho-L-threonyl-[protein] + ADP + H(+). Two specific sites, one in the kinase domain (Thr-193) and the other in the C-terminal regulatory region (Ser-356), need to be phosphorylated for its full activation. Serine/threonine-protein kinase which is involved in the regulation of a wide variety of ion channels, membrane transporters, cell growth, survival and proliferation. Up-regulates Na(+) channels: SCNN1A/ENAC, K(+) channels: KCNA3/Kv1.3, KCNE1 and KCNQ1, amino acid transporter: SLC6A19, glutamate transporter: SLC1A6/EAAT4, glutamate receptors: GRIA1/GLUR1 and GRIK2/GLUR6, Na(+)/H(+) exchanger: SLC9A3/NHE3, and the Na(+)/K(+) ATPase. The sequence is that of Serine/threonine-protein kinase Sgk2 (SGK2) from Homo sapiens (Human).